The sequence spans 476 residues: Angiotensinogen (476 aa).

Positions 1–24 (MAPAGMSLRATILCLLAWAGLAAG) are cleaved as a signal peptide. Residues Asn-38, Asn-161, Asn-295, and Asn-319 are each glycosylated (N-linked (GlcNAc...) asparagine). The cysteines at positions 42 and 162 are disulfide-linked.

The protein belongs to the serpin family. In terms of processing, in response to low blood pressure, the enzyme renin/REN cleaves angiotensinogen to produce angiotensin-1. Angiotensin-1 is a substrate of ACE (angiotensin converting enzyme) that removes a dipeptide to yield the physiologically active peptide angiotensin-2. Angiotensin-1 and angiotensin-2 can be further processed to generate angiotensin-3, angiotensin-4. Angiotensin 1-9 is cleaved from angiotensin-1 by ACE2 and can be further processed by ACE to produce angiotensin 1-7, angiotensin 1-5 and angiotensin 1-4. Angiotensin 1-7 has also been proposed to be cleaved from angiotensin-2 by ACE2 or from angiotensin-1 by MME (neprilysin). The disulfide bond is labile. Angiotensinogen is present in the circulation in a near 40:60 ratio with the oxidized disulfide-bonded form, which preferentially interacts with receptor-bound renin.

It is found in the secreted. In terms of biological role, essential component of the renin-angiotensin system (RAS), a potent regulator of blood pressure, body fluid and electrolyte homeostasis. Functionally, acts directly on vascular smooth muscle as a potent vasoconstrictor, affects cardiac contractility and heart rate through its action on the sympathetic nervous system, and alters renal sodium and water absorption through its ability to stimulate the zona glomerulosa cells of the adrenal cortex to synthesize and secrete aldosterone. Acts by binding to angiotensin receptors AGTR1 and AGTR2. Also binds the DEAR/FBXW7-AS1 receptor. Its function is as follows. Stimulates aldosterone release. Is a ligand for the G-protein coupled receptor MAS1. Has vasodilator and antidiuretic effects. Has an antithrombotic effect that involves MAS1-mediated release of nitric oxide from platelets. In Gorilla gorilla gorilla (Western lowland gorilla), this protein is Angiotensinogen (AGT).